Consider the following 245-residue polypeptide: Aliphatic sulfonates import ATP-binding protein SsuB (245 aa).

The 220-residue stretch at 6-225 folds into the ABC transporter domain; that stretch reads VTVRGLRRAF…SRGDEGFDDL (220 aa). 38 to 45 contributes to the ATP binding site; the sequence is GLSGSGKS.

Belongs to the ABC transporter superfamily. Aliphatic sulfonates importer (TC 3.A.1.17.2) family. The complex is composed of two ATP-binding proteins (SsuB), two transmembrane proteins (SsuC) and a solute-binding protein (SsuA).

The protein localises to the cell membrane. The enzyme catalyses ATP + H2O + aliphatic sulfonate-[sulfonate-binding protein]Side 1 = ADP + phosphate + aliphatic sulfonateSide 2 + [sulfonate-binding protein]Side 1.. Its function is as follows. Part of the ABC transporter complex SsuABC involved in aliphatic sulfonates import. Responsible for energy coupling to the transport system. This chain is Aliphatic sulfonates import ATP-binding protein SsuB, found in Mycobacterium sp. (strain MCS).